The chain runs to 555 residues: Undecaprenyl phosphate-alpha-4-amino-4-deoxy-L-arabinose arabinosyl transferase (555 aa).

11 helical membrane passes run Gly6–Gly26, Phe87–Met107, Leu116–Leu136, Phe178–Ile198, Leu206–Leu226, Ala257–Leu277, Glu293–Gly313, Leu315–Glu335, Val351–Leu371, Pro384–Val404, and Trp411–Gln431.

The protein belongs to the glycosyltransferase 83 family.

It localises to the cell inner membrane. The enzyme catalyses 4-amino-4-deoxy-alpha-L-arabinopyranosyl di-trans,octa-cis-undecaprenyl phosphate + lipid IVA = lipid IIA + di-trans,octa-cis-undecaprenyl phosphate.. The protein operates within lipopolysaccharide metabolism; 4-amino-4-deoxy-beta-L-arabinose-lipid A biosynthesis. Functionally, catalyzes the transfer of the L-Ara4N moiety of the glycolipid undecaprenyl phosphate-alpha-L-Ara4N to lipid A. The modified arabinose is attached to lipid A and is required for resistance to polymyxin and cationic antimicrobial peptides. This is Undecaprenyl phosphate-alpha-4-amino-4-deoxy-L-arabinose arabinosyl transferase from Serratia proteamaculans (strain 568).